We begin with the raw amino-acid sequence, 1194 residues long: Metabotropic glutamate receptor 1 (1194 aa).

A signal peptide spans 1–18 (MVGLLLFFFPAIFLEVSL). Residues 19–592 (LPRSPGRKVL…VRYLEWSNIE (574 aa)) lie on the Extracellular side of the membrane. C67 and C109 are oxidised to a cystine. Y74 is an L-glutamate binding site. N98 carries an N-linked (GlcNAc...) asparagine glycan. L-glutamate is bound by residues S165 and 186-188 (SAT). The N-linked (GlcNAc...) asparagine glycan is linked to N223. Y236 contributes to the L-glutamate binding site. C289 and C291 are joined by a disulfide. D318 contributes to the L-glutamate binding site. The cysteines at positions 378 and 394 are disulfide-linked. N-linked (GlcNAc...) asparagine glycosylation occurs at N397. Residue K409 coordinates L-glutamate. The cysteines at positions 432 and 439 are disulfide-linked. N515 carries N-linked (GlcNAc...) asparagine glycosylation. A helical membrane pass occupies residues 593–615 (SIIAIAFSCLGILVTLFVTLIFV). Residues 616 to 629 (LYRDTPVVKSSSRE) lie on the Cytoplasmic side of the membrane. The helical transmembrane segment at 630–650 (LCYIILAGIFLGYVCPFTLIA) threads the bilayer. Over 651–658 (KPTTTSCY) the chain is Extracellular. C657 and C746 are joined by a disulfide. A helical transmembrane segment spans residues 659 to 680 (LQRLLVGLSSAMCYSALVTKTN). Topologically, residues 681-703 (RIARILAGSKKKICTRKPRFMSA) are cytoplasmic. A helical membrane pass occupies residues 704 to 727 (WAQVIIASILISVQLTLVVTLIIM). At 728-750 (EPPMPILSYPSIKEVYLICNTSN) the chain is on the extracellular side. Residues 751–772 (LGVVAPLGYNGLLIMSCTYYAF) traverse the membrane as a helical segment. Topologically, residues 773 to 785 (KTRNVPANFNEAK) are cytoplasmic. Residues 786 to 807 (YIAFTMYTTCIIWLAFVPIYFG) form a helical membrane-spanning segment. At 808 to 815 (SNYKIITT) the chain is on the extracellular side. The chain crosses the membrane as a helical span at residues 816 to 840 (CFAVSLSVTVALGCMFTPKMYIIIA). The Cytoplasmic segment spans residues 841-1194 (KPERNVRSAF…RDYKQSSSTL (354 aa)). Position 853 is a phosphoserine (S853). Position 871 is a phosphothreonine (T871). The interval 883–905 (AGNANSNGKSVSWSEPGGGQVPK) is disordered. Positions 885–895 (NANSNGKSVSW) are enriched in polar residues. Residues S894 and S969 each carry the phosphoserine modification. The segment at 1007–1030 (PALPKGLPPPLQQQQQPPPQQKSL) is disordered. Over residues 1012 to 1026 (GLPPPLQQQQQPPPQ) the composition is skewed to pro residues. S1091 bears the Phosphoserine mark. The segment at 1113 to 1173 (HEREGNTEED…SPVSESVLCT (61 aa)) is disordered. A compositionally biased stretch (acidic residues) spans 1119 to 1131 (TEEDELEEEEEDL). S1142 carries the phosphoserine modification. T1146 bears the Phosphothreonine mark. Residue S1149 is modified to Phosphoserine. Residues 1154-1170 (SVASGSSVPSSPVSESV) show a composition bias toward low complexity.

It belongs to the G-protein coupled receptor 3 family. As to quaternary structure, homodimer; disulfide-linked. The PPXXF motif binds HOMER1, HOMER2 and HOMER3. Interacts with TAMALIN. Interacts with RYR1, RYR2, ITPR1, SHANK1 and SHANK3. Interacts with SIAH1. As to expression, detected in brain.

The protein localises to the cell membrane. The protein resides in the postsynaptic cell membrane. It is found in the cell projection. Its subcellular location is the dendrite. Its activity is regulated as follows. Signaling is inhibited by the antagonist LY341495. The LY341495 binding site partially overlaps with the glutamate binding site. Signaling is also inhibited by synthetic allosteric regulators, such as FITM (4-fluoro-N-(4-(6-(isopropylamino)pyrimidin-4-yl)thiazol-2-yl)-N-methylbenzamide) that bind in a pocket between the transmembrane helices. Its function is as follows. G-protein coupled receptor for glutamate. Ligand binding causes a conformation change that triggers signaling via guanine nucleotide-binding proteins (G proteins) and modulates the activity of down-stream effectors. Signaling activates a phosphatidylinositol-calcium second messenger system. May participate in the central action of glutamate in the CNS, such as long-term potentiation in the hippocampus and long-term depression in the cerebellum. May function in the light response in the retina. Induces GRID1 and GRID2 cation-channel activation via GNAQ-PLC-PKC pathway in dopaminergic neurons and cerebellar Purkinje cell, respectively. The sequence is that of Metabotropic glutamate receptor 1 (GRM1) from Homo sapiens (Human).